Consider the following 257-residue polypeptide: Ribonuclease HII (257 aa).

Positions 72 to 257 (ERVAGIDEVG…FSPVQKILQA (186 aa)) constitute an RNase H type-2 domain. Residues Asp-78, Glu-79, and Asp-170 each coordinate a divalent metal cation.

It belongs to the RNase HII family. The cofactor is Mn(2+). Requires Mg(2+) as cofactor.

It localises to the cytoplasm. It carries out the reaction Endonucleolytic cleavage to 5'-phosphomonoester.. Functionally, endonuclease that specifically degrades the RNA of RNA-DNA hybrids. This is Ribonuclease HII from Levilactobacillus brevis (strain ATCC 367 / BCRC 12310 / CIP 105137 / JCM 1170 / LMG 11437 / NCIMB 947 / NCTC 947) (Lactobacillus brevis).